A 353-amino-acid chain; its full sequence is Photosystem II protein D1 (353 aa).

Thr2 is subject to N-acetylthreonine. Thr2 carries the phosphothreonine modification. A run of 3 helical transmembrane segments spans residues Tyr29–Ser46, His118–Leu133, and Trp142–Ala156. Position 118 (His118) interacts with chlorophyll a. A pheophytin a-binding site is contributed by Tyr126. [CaMn4O5] cluster contacts are provided by Asp170 and Glu189. A helical membrane pass occupies residues Phe197–Leu218. His198 is a binding site for chlorophyll a. A quinone is bound by residues His215 and Ser264–Phe265. A Fe cation-binding site is contributed by His215. His272 lines the Fe cation pocket. A helical transmembrane segment spans residues Phe274–Leu288. [CaMn4O5] cluster-binding residues include His332, Glu333, Asp342, and Ala344. A propeptide spanning residues Ser345 to Ala353 is cleaved from the precursor.

Belongs to the reaction center PufL/M/PsbA/D family. PSII is composed of 1 copy each of membrane proteins PsbA, PsbB, PsbC, PsbD, PsbE, PsbF, PsbH, PsbI, PsbJ, PsbK, PsbL, PsbM, PsbT, PsbX, PsbY, PsbZ, Psb30/Ycf12, at least 3 peripheral proteins of the oxygen-evolving complex and a large number of cofactors. It forms dimeric complexes. The D1/D2 heterodimer binds P680, chlorophylls that are the primary electron donor of PSII, and subsequent electron acceptors. It shares a non-heme iron and each subunit binds pheophytin, quinone, additional chlorophylls, carotenoids and lipids. D1 provides most of the ligands for the Mn4-Ca-O5 cluster of the oxygen-evolving complex (OEC). There is also a Cl(-1) ion associated with D1 and D2, which is required for oxygen evolution. The PSII complex binds additional chlorophylls, carotenoids and specific lipids. is required as a cofactor. Post-translationally, tyr-161 forms a radical intermediate that is referred to as redox-active TyrZ, YZ or Y-Z. In terms of processing, C-terminally processed by CTPA; processing is essential to allow assembly of the oxygen-evolving complex and thus photosynthetic growth.

It localises to the plastid. Its subcellular location is the chloroplast thylakoid membrane. It catalyses the reaction 2 a plastoquinone + 4 hnu + 2 H2O = 2 a plastoquinol + O2. Functionally, photosystem II (PSII) is a light-driven water:plastoquinone oxidoreductase that uses light energy to abstract electrons from H(2)O, generating O(2) and a proton gradient subsequently used for ATP formation. It consists of a core antenna complex that captures photons, and an electron transfer chain that converts photonic excitation into a charge separation. The D1/D2 (PsbA/PsbD) reaction center heterodimer binds P680, the primary electron donor of PSII as well as several subsequent electron acceptors. This Oltmannsiellopsis viridis (Marine flagellate) protein is Photosystem II protein D1.